A 651-amino-acid polypeptide reads, in one-letter code: Epithelial sodium channel subunit beta (651 aa).

The Cytoplasmic portion of the chain corresponds to 1–50; it reads MFLKRWFIRALHRLQKGPGYGYSELFVWYCNNTNTHGPKRLIIEGPKKKT. A helical membrane pass occupies residues 51–71; the sequence is LWSLFTVTFACLVFWQWGLLI. Residues 72–541 lie on the Extracellular side of the membrane; sequence QTYLSWGVSV…GGQFGFWMGG (470 aa). 8 cysteine pairs are disulfide-bonded: Cys-98–Cys-281, Cys-205–Cys-212, Cys-258–Cys-265, Cys-370–Cys-457, Cys-395–Cys-453, Cys-399–Cys-449, Cys-408–Cys-435, and Cys-410–Cys-424. Residues 542–562 form a helical membrane-spanning segment; the sequence is SVLCIIEFGEVFIDCIWIAVI. Over 563 to 651 the chain is Cytoplasmic; that stretch reads RFVKWYKNRK…TEHHSDSEDL (89 aa). The segment at 612 to 651 is disordered; sequence QPPDLYLPTTLEIPGTPPPKYDSLRVHPIDTEHHSDSEDL. Basic and acidic residues predominate over residues 633 to 651; that stretch reads DSLRVHPIDTEHHSDSEDL.

The protein belongs to the amiloride-sensitive sodium channel (TC 1.A.6) family. SCNN1B subfamily. As to quaternary structure, component of the heterotrimeric epithelial sodium channel (ENaC) composed of an alpha/SCNN1A, a beta/SCNN1B and a gamma/SCNN1G subunit. Strongly expressed in gill, kidney and rectum and more weakly in brain, eye, liver and muscle.

It is found in the apical cell membrane. The protein resides in the cytoplasmic vesicle membrane. It carries out the reaction Na(+)(in) = Na(+)(out). With respect to regulation, originally identified and characterized by its inhibition by the diuretic drug amiloride. Its function is as follows. This is one of the three pore-forming subunits of the heterotrimeric epithelial sodium channel (ENaC), a critical regulator of sodium balance and fluid homeostasis. ENaC operates in epithelial tissues, where it mediates the electrodiffusion of sodium ions from extracellular fluid through the apical membrane of cells, with water following osmotically. This Neoceratodus forsteri (Australian lungfish) protein is Epithelial sodium channel subunit beta.